A 323-amino-acid polypeptide reads, in one-letter code: Galectin-4 (323 aa).

2 Galectin domains span residues 19-150 (YYQP…INFI) and 194-323 (YFGR…YVQI). A beta-D-galactoside is bound at residue 256 to 262 (WGSEEKK). Phosphoserine is present on S258.

As to quaternary structure, monomer.

Its function is as follows. Galectin that binds lactose and a related range of sugars. May be involved in the assembly of adherens junctions. This is Galectin-4 (LGALS4) from Homo sapiens (Human).